Reading from the N-terminus, the 131-residue chain is Small ribosomal subunit protein uS11 (131 aa).

The protein belongs to the universal ribosomal protein uS11 family. In terms of assembly, part of the 30S ribosomal subunit. Interacts with proteins S7 and S18. Binds to IF-3.

In terms of biological role, located on the platform of the 30S subunit, it bridges several disparate RNA helices of the 16S rRNA. Forms part of the Shine-Dalgarno cleft in the 70S ribosome. This chain is Small ribosomal subunit protein uS11, found in Deinococcus geothermalis (strain DSM 11300 / CIP 105573 / AG-3a).